Consider the following 365-residue polypeptide: Protein BIIDXI (365 aa).

A signal peptide spans 1 to 21 (MKEMGVIVLLLLHSFFYVAFC). N-linked (GlcNAc...) asparagine glycans are attached at residues Asn48, Asn121, and Asn208.

As to quaternary structure, interacts with PME3. In terms of tissue distribution, mainly expressed in vascular tissues of roots, leaves, stamens and petals.

It localises to the secreted. Its subcellular location is the cell wall. In terms of biological role, together with At5g11420, acts as a positive regulator of PME3 activity during several developmental processes, including reproductive organ development, hypocotyls elongation, seed germination and endosperm (testa) rupture at the micropyle, probably by modulating the pectin methylation status in cell walls. Involved in the regulation of pectin methylation degree to modulate cell wall physiology during cell separation, hypocotyl growth and embryo development. Required during embryo development, especially to regulate homogalacturonans (HG) methyl esterification in endosperm cell walls, a process related to embryo bending. Also implicated in hypocotyl growth and gravitropic response via the regulation of auxin efflux. Also regulates cell wall pectin upon root-knot nematode Meloidogyne incognita infection. This chain is Protein BIIDXI, found in Arabidopsis thaliana (Mouse-ear cress).